Reading from the N-terminus, the 450-residue chain is FAD-linked oxidoreductase ptmO (450 aa).

Positions 32–203 (PPELPYAIVR…TRFFIRTRPA (172 aa)) constitute an FAD-binding PCMH-type domain.

The protein belongs to the oxygen-dependent FAD-linked oxidoreductase family. It depends on FAD as a cofactor.

Its pathway is secondary metabolite biosynthesis. Functionally, FAD-linked oxidoreductase; part of the gene cluster that mediates the biosynthesis of the indole diterpenes penitrems. The geranylgeranyl diphosphate (GGPP) synthase ptmG catalyzes the first step in penitrem biosynthesis via conversion of farnesyl pyrophosphate and isopentyl pyrophosphate into geranylgeranyl pyrophosphate (GGPP). Condensation of indole-3-glycerol phosphate with GGPP by the prenyl transferase ptmC then forms 3-geranylgeranylindole (3-GGI). Epoxidation by the FAD-dependent monooxygenase ptmM leads to a epoxidized-GGI that is substrate of the terpene cyclase ptmB for cyclization to yield paspaline. Paspaline is subsequently converted to 13-desoxypaxilline by the cytochrome P450 monooxygenase ptmP, the latter being then converted to paxilline by the cytochrome P450 monooxygenase ptmQ. Paxilline is converted to beta-paxitriol via C-10 ketoreduction by the short-chain dehydrogenase ptmH which can be monoprenylated at the C-20 by the indole diterpene prenyltransferase ptmD. A two-step elimination (acetylation and elimination) process performed by the O-acetyltransferase ptmV and ptmI leads to the production of the prenylated form of penijanthine. The FAD-linked oxidoreductase ptmO then converts the prenylated form of penijanthine into PC-M5 which is in turn transformed into PC-M4 by the aromatic dimethylallyltransferase ptmE. Five sequential oxidative transformations performed by the cytochrome P450 monooxygenases ptmK, ptmU, ptmL, ptmN and ptmJ yield the various penitrem compounds. PtmK, ptmU and ptmM are involved in the formation of the key bicyclic ring of penitrem C via the formation of the intermediates secopenitrem D and penitrem D. PtmL catalyzes the epoxidation of penitrem D and C to yield penitrem B and F, respectively. PtmJ catalyzes the last benzylic hydroxylation to convert penitrem B to prenitrem E and penitrem F to penitrem A. This Penicillium ochrochloron protein is FAD-linked oxidoreductase ptmO.